The sequence spans 165 residues: Small ribosomal subunit protein uS5 (165 aa).

An S5 DRBM domain is found at 10–73; it reads LKEKVVFINR…EDAKKNLVEV (64 aa).

This sequence belongs to the universal ribosomal protein uS5 family. As to quaternary structure, part of the 30S ribosomal subunit. Contacts proteins S4 and S8.

In terms of biological role, with S4 and S12 plays an important role in translational accuracy. Located at the back of the 30S subunit body where it stabilizes the conformation of the head with respect to the body. The sequence is that of Small ribosomal subunit protein uS5 from Clostridium acetobutylicum (strain ATCC 824 / DSM 792 / JCM 1419 / IAM 19013 / LMG 5710 / NBRC 13948 / NRRL B-527 / VKM B-1787 / 2291 / W).